The primary structure comprises 302 residues: Quinolinate synthase (302 aa).

Positions 24 and 41 each coordinate iminosuccinate. Cys86 is a binding site for [4Fe-4S] cluster. Residues Tyr112–Asn114 and Ser129 each bind iminosuccinate. Residue Cys171 coordinates [4Fe-4S] cluster. Iminosuccinate is bound by residues His197 to Glu199 and Thr214. Residue Cys259 coordinates [4Fe-4S] cluster.

Belongs to the quinolinate synthase family. Type 2 subfamily. The cofactor is [4Fe-4S] cluster.

The protein resides in the cytoplasm. The catalysed reaction is iminosuccinate + dihydroxyacetone phosphate = quinolinate + phosphate + 2 H2O + H(+). It functions in the pathway cofactor biosynthesis; NAD(+) biosynthesis; quinolinate from iminoaspartate: step 1/1. Functionally, catalyzes the condensation of iminoaspartate with dihydroxyacetone phosphate to form quinolinate. The polypeptide is Quinolinate synthase (Dehalococcoides mccartyi (strain ATCC BAA-2266 / KCTC 15142 / 195) (Dehalococcoides ethenogenes (strain 195))).